We begin with the raw amino-acid sequence, 70 residues long: UPF0337 protein YjbJ (70 aa).

This sequence belongs to the UPF0337 (CsbD) family.

The sequence is that of UPF0337 protein YjbJ (yjbJ) from Salmonella typhi.